The sequence spans 186 residues: ATP synthase subunit delta (186 aa).

It belongs to the ATPase delta chain family. In terms of assembly, F-type ATPases have 2 components, F(1) - the catalytic core - and F(0) - the membrane proton channel. F(1) has five subunits: alpha(3), beta(3), gamma(1), delta(1), epsilon(1). F(0) has three main subunits: a(1), b(2) and c(10-14). The alpha and beta chains form an alternating ring which encloses part of the gamma chain. F(1) is attached to F(0) by a central stalk formed by the gamma and epsilon chains, while a peripheral stalk is formed by the delta and b chains.

It is found in the cell inner membrane. In terms of biological role, f(1)F(0) ATP synthase produces ATP from ADP in the presence of a proton or sodium gradient. F-type ATPases consist of two structural domains, F(1) containing the extramembraneous catalytic core and F(0) containing the membrane proton channel, linked together by a central stalk and a peripheral stalk. During catalysis, ATP synthesis in the catalytic domain of F(1) is coupled via a rotary mechanism of the central stalk subunits to proton translocation. Functionally, this protein is part of the stalk that links CF(0) to CF(1). It either transmits conformational changes from CF(0) to CF(1) or is implicated in proton conduction. The chain is ATP synthase subunit delta from Brucella suis biovar 1 (strain 1330).